Consider the following 342-residue polypeptide: Fructose-1,6-bisphosphatase class 1 (342 aa).

Mg(2+) is bound by residues E97, D119, L121, and D122. Substrate is bound by residues 122–125, N215, Y247, and K280; that span reads DGSS. E286 lines the Mg(2+) pocket.

Belongs to the FBPase class 1 family. In terms of assembly, homotetramer. The cofactor is Mg(2+).

It is found in the cytoplasm. It carries out the reaction beta-D-fructose 1,6-bisphosphate + H2O = beta-D-fructose 6-phosphate + phosphate. It functions in the pathway carbohydrate biosynthesis; gluconeogenesis. The polypeptide is Fructose-1,6-bisphosphatase class 1 (Leptospira borgpetersenii serovar Hardjo-bovis (strain JB197)).